Consider the following 437-residue polypeptide: Mannan endo-1,4-beta-mannosidase A (437 aa).

The N-terminal stretch at 1–19 (MMMLSKSLLSAATAASALA) is a signal peptide. Positions 20-27 (AVLQPVPR) are excised as a propeptide. Residues 28–376 (ASSFVTISGT…VDAINGGTTT (349 aa)) form a catalytic region. A disulfide bridge connects residues cysteine 53 and cysteine 56. 2 N-linked (GlcNAc...) asparagine glycosylation sites follow: asparagine 157 and asparagine 184. The active-site Proton donor/acceptor is glutamate 196. Residue 196–198 (EPR) participates in substrate binding. An intrachain disulfide couples cysteine 199 to cysteine 202. Substrate contacts are provided by glutamate 232 and tryptophan 274. Asparagine 277 carries N-linked (GlcNAc...) asparagine glycosylation. Cysteine 292 and cysteine 299 are joined by a disulfide. The Nucleophile role is filled by glutamate 303. Cysteine 311 and cysteine 361 form a disulfide bridge. Asparagine 355 is a glycosylation site (N-linked (GlcNAc...) asparagine). Residues 372-399 (GGTTTPPPVSSTTTTSSRTSSTPPPPGG) are disordered. Residues 377 to 399 (PPPVSSTTTTSSRTSSTPPPPGG) are linker. A compositionally biased stretch (low complexity) spans 381-392 (SSTTTTSSRTSS). Residues 400 to 435 (SCSPLYGQCGGSGYTGPTCCAQGTCIYSNYWYSQCL) enclose the CBM1 domain.

Belongs to the glycosyl hydrolase 5 (cellulase A) family. Monomer.

The protein resides in the secreted. It catalyses the reaction Random hydrolysis of (1-&gt;4)-beta-D-mannosidic linkages in mannans, galactomannans and glucomannans.. In terms of biological role, endo-1,4-mannanase that catalyzes the random hydrolysis of (1-&gt;4)-beta-D-mannosidic linkages in mannans and heteromannans. It is a crucial enzyme for depolymerization of seed galactomannans and wood galactoglucomannans. Active against locust bean gum and ivory nut mannan, releasing mainly tri- and disaccharides. Also has transglycosylation activity. Transglycosylation of two mannotrioses into a mannohexaose is the major transglycosylation route. The polypeptide is Mannan endo-1,4-beta-mannosidase A (Hypocrea jecorina (strain ATCC 56765 / BCRC 32924 / NRRL 11460 / Rut C-30) (Trichoderma reesei)).